The primary structure comprises 505 residues: ATP synthase subunit beta (505 aa).

Residue 158–165 (GGAGVGKT) coordinates ATP.

The protein belongs to the ATPase alpha/beta chains family. As to quaternary structure, F-type ATPases have 2 components, CF(1) - the catalytic core - and CF(0) - the membrane proton channel. CF(1) has five subunits: alpha(3), beta(3), gamma(1), delta(1), epsilon(1). CF(0) has three main subunits: a(1), b(2) and c(9-12). The alpha and beta chains form an alternating ring which encloses part of the gamma chain. CF(1) is attached to CF(0) by a central stalk formed by the gamma and epsilon chains, while a peripheral stalk is formed by the delta and b chains.

Its subcellular location is the cell inner membrane. The catalysed reaction is ATP + H2O + 4 H(+)(in) = ADP + phosphate + 5 H(+)(out). In terms of biological role, produces ATP from ADP in the presence of a proton gradient across the membrane. The catalytic sites are hosted primarily by the beta subunits. The sequence is that of ATP synthase subunit beta from Parabacteroides distasonis (strain ATCC 8503 / DSM 20701 / CIP 104284 / JCM 5825 / NCTC 11152).